We begin with the raw amino-acid sequence, 349 residues long: uncharacterized protein (349 aa).

Positions 116 to 135 are enriched in polar residues; the sequence is HFSQTNPKSTPEPPCTSSSG. Residues 116–148 form a disordered region; that stretch reads HFSQTNPKSTPEPPCTSSSGAGDCHENLPADGY.

This is an uncharacterized protein from Caenorhabditis elegans.